Here is a 292-residue protein sequence, read N- to C-terminus: Succinate dehydrogenase assembly factor 2, mitochondrial (292 aa).

Disordered stretches follow at residues 27–68 and 266–292; these read RSFG…NTTS and TGFH…VFDS. Positions 55-68 are enriched in polar residues; it reads TNRPPNQHVPNTTS.

Belongs to the SDHAF2 family. Interacts with the flavoprotein subunit within the SDH catalytic dimer.

It localises to the mitochondrion matrix. Plays an essential role in the assembly of succinate dehydrogenase (SDH), an enzyme complex (also referred to as respiratory complex II) that is a component of both the tricarboxylic acid (TCA) cycle and the mitochondrial electron transport chain, and which couples the oxidation of succinate to fumarate with the reduction of ubiquinone (coenzyme Q) to ubiquinol. Required for flavinylation (covalent attachment of FAD) of the flavoprotein subunit of the SDH catalytic dimer. The chain is Succinate dehydrogenase assembly factor 2, mitochondrial from Aspergillus flavus (strain ATCC 200026 / FGSC A1120 / IAM 13836 / NRRL 3357 / JCM 12722 / SRRC 167).